Here is a 350-residue protein sequence, read N- to C-terminus: Inositol 2-dehydrogenase/D-chiro-inositol 3-dehydrogenase (350 aa).

This sequence belongs to the Gfo/Idh/MocA family. In terms of assembly, homotetramer.

The catalysed reaction is myo-inositol + NAD(+) = scyllo-inosose + NADH + H(+). It carries out the reaction 1D-chiro-inositol + NAD(+) = scyllo-inosine + NADH + H(+). Its pathway is polyol metabolism; myo-inositol degradation into acetyl-CoA; acetyl-CoA from myo-inositol: step 1/7. Its function is as follows. Involved in the oxidation of myo-inositol (MI) and D-chiro-inositol (DCI) to 2-keto-myo-inositol (2KMI or 2-inosose) and 1-keto-D-chiro-inositol (1KDCI), respectively. The polypeptide is Inositol 2-dehydrogenase/D-chiro-inositol 3-dehydrogenase (Lactiplantibacillus plantarum (strain ATCC BAA-793 / NCIMB 8826 / WCFS1) (Lactobacillus plantarum)).